The primary structure comprises 502 residues: UDP-N-acetylmuramate--L-alanine ligase (502 aa).

Residue 120 to 126 participates in ATP binding; the sequence is GTHGKTS.

It belongs to the MurCDEF family.

It localises to the cytoplasm. The catalysed reaction is UDP-N-acetyl-alpha-D-muramate + L-alanine + ATP = UDP-N-acetyl-alpha-D-muramoyl-L-alanine + ADP + phosphate + H(+). It functions in the pathway cell wall biogenesis; peptidoglycan biosynthesis. Cell wall formation. The polypeptide is UDP-N-acetylmuramate--L-alanine ligase (Rhodococcus erythropolis (strain PR4 / NBRC 100887)).